Consider the following 509-residue polypeptide: Tyrosine-protein kinase STK (509 aa).

The segment covering 1–16 (MGPCCSKQTKALNNQP) has biased composition (polar residues). The segment at 1 to 23 (MGPCCSKQTKALNNQPDKSKSKD) is disordered. Gly-2 carries the N-myristoyl glycine lipid modification. Positions 59 to 120 (PGVTIFVALY…PSTYVAPEKS (62 aa)) constitute an SH3 domain. The region spanning 126 to 218 (WYFGDVKRAE…GLVCALTLPC (93 aa)) is the SH2 domain. The Protein kinase domain occupies 240 to 495 (LRLNRKLGAG…LQGVLEDYFV (256 aa)). ATP-binding positions include 246–254 (LGAGQFGEV) and Lys-268. Residue Asp-360 is the Proton acceptor of the active site. Tyr-390 is modified (phosphotyrosine; by autocatalysis).

It belongs to the protein kinase superfamily. Tyr protein kinase family. SRC subfamily.

The catalysed reaction is L-tyrosyl-[protein] + ATP = O-phospho-L-tyrosyl-[protein] + ADP + H(+). This Hydra vulgaris (Hydra) protein is Tyrosine-protein kinase STK (STK).